The chain runs to 29 residues: Conotoxin SIVC (29 aa).

The residue at position 1 (A1) is an N-acetylalanine; partial. P2 is modified (4-hydroxyproline). T7 and T9 each carry an O-linked (HexNAc...) threonine glycan. Residues P18 and P22 each carry the 4-hydroxyproline modification. A Cysteine amide modification is found at C29.

The protein belongs to the conotoxin A superfamily. Post-translationally, O-linked glycans consist of Hex4-HexNAc2 hexasaccharides. N-terminus is found to be free and N-acetylated, depending on the fraction studied. In terms of processing, contains 3 disulfide bonds. Expressed by the venom duct. Low expression in the distal venom duct sections.

It localises to the secreted. Its function is as follows. Probable neurotoxin with ion channel inhibitor activity. The chain is Conotoxin SIVC from Conus striatus (Striated cone).